Here is a 783-residue protein sequence, read N- to C-terminus: Isoamylase 1, chloroplastic (783 aa).

Residues 1–43 constitute a chloroplast transit peptide; sequence MDAIKCSSSFLHHTKLNTLFSNHTFPKISAPNFKPLFRPISIS. The Nucleophile role is filled by Asp-410. Glu-466 (proton donor) is an active-site residue.

This sequence belongs to the glycosyl hydrolase 13 family. As to quaternary structure, associates with ISA2 to form the heteromultimeric complex Iso1 required for amylopectin synthesis.

The protein resides in the plastid. It is found in the chloroplast. The enzyme catalyses Hydrolysis of (1-&gt;6)-alpha-D-glucosidic branch linkages in glycogen, amylopectin and their beta-limit dextrins.. It participates in glycan biosynthesis; starch biosynthesis. Its function is as follows. Involved in the trimming of pre-amylopectin chains. Accelerates the crystallization of nascent amylopectin molecules during starch synthesis. ISA1 and ISA2 work exclusively together as a multimeric holoenzyme. ISA1-ISA2 removes preferentially branches that are very close to other branches. Promotes negative gravitropic responses in shoots by facilitating starch granules (statoliths) formation in hypocotyls. This chain is Isoamylase 1, chloroplastic, found in Arabidopsis thaliana (Mouse-ear cress).